The sequence spans 139 residues: Cytochrome c-551 (139 aa).

The signal sequence occupies residues 1–20; it reads MTRTLAVVLAMTFSAAPVFA. Residues Cys34, Cys37, His38, and Met116 each coordinate heme c.

It belongs to the cytochrome c family. Post-translationally, binds 1 heme c group covalently per subunit.

The chain is Cytochrome c-551 from Roseobacter denitrificans (strain ATCC 33942 / OCh 114) (Erythrobacter sp. (strain OCh 114)).